A 95-amino-acid polypeptide reads, in one-letter code: MESRDIILRPVVTEATMATMDDKRYTFDVDVRATKTQVKHAIEDIFDVKVVKVNVMNLKGKKKRQGRYEGYTKKRRKAIVSLSADSKEIKLFNEE.

The protein belongs to the universal ribosomal protein uL23 family. As to quaternary structure, part of the 50S ribosomal subunit. Contacts protein L29, and trigger factor when it is bound to the ribosome.

Functionally, one of the early assembly proteins it binds 23S rRNA. One of the proteins that surrounds the polypeptide exit tunnel on the outside of the ribosome. Forms the main docking site for trigger factor binding to the ribosome. In Levilactobacillus brevis (strain ATCC 367 / BCRC 12310 / CIP 105137 / JCM 1170 / LMG 11437 / NCIMB 947 / NCTC 947) (Lactobacillus brevis), this protein is Large ribosomal subunit protein uL23.